Consider the following 269-residue polypeptide: UPF0761 membrane protein NTHI0384 (269 aa).

6 consecutive transmembrane segments (helical) span residues 32 to 52 (MLAI…FPVF), 89 to 109 (MSAV…NNID), 128 to 148 (FAIY…SIGI), 168 to 188 (LLSF…YTVV), 203 to 223 (FLAA…VVTF), and 232 to 252 (AMAT…VVLV).

Belongs to the UPF0761 family.

The protein localises to the cell inner membrane. The protein is UPF0761 membrane protein NTHI0384 of Haemophilus influenzae (strain 86-028NP).